A 274-amino-acid polypeptide reads, in one-letter code: Light-independent protochlorophyllide reductase iron-sulfur ATP-binding protein (274 aa).

Residues 12–17 (GIGKST) and Lys-41 contribute to the ATP site. Mg(2+) is bound at residue Ser-16. [4Fe-4S] cluster is bound by residues Cys-97 and Cys-131.

Belongs to the NifH/BchL/ChlL family. Homodimer. Protochlorophyllide reductase is composed of three subunits; BchL, BchN and BchB. Requires [4Fe-4S] cluster as cofactor.

The catalysed reaction is chlorophyllide a + oxidized 2[4Fe-4S]-[ferredoxin] + 2 ADP + 2 phosphate = protochlorophyllide a + reduced 2[4Fe-4S]-[ferredoxin] + 2 ATP + 2 H2O. It functions in the pathway porphyrin-containing compound metabolism; bacteriochlorophyll biosynthesis (light-independent). Its function is as follows. Component of the dark-operative protochlorophyllide reductase (DPOR) that uses Mg-ATP and reduced ferredoxin to reduce ring D of protochlorophyllide (Pchlide) to form chlorophyllide a (Chlide). This reaction is light-independent. The L component serves as a unique electron donor to the NB-component of the complex, and binds Mg-ATP. The sequence is that of Light-independent protochlorophyllide reductase iron-sulfur ATP-binding protein from Chloroherpeton thalassium (strain ATCC 35110 / GB-78).